A 575-amino-acid polypeptide reads, in one-letter code: Serine/threonine-protein kinase Pink1, mitochondrial (575 aa).

The transit peptide at 1-51 (MSLLAYTNLLLQNGRIFRYYKKANIKKFIKKIIKLDLKSTPSEASVSRQTF) directs the protein to the mitochondrion. The Mitochondrial intermembrane portion of the chain corresponds to 52-94 (LSTGLNSVKNAVQLQARKLLINNVLERVTPTLNSDLKKKAAKR). Residues 95-118 (LFYGDSAPFFALVGVSLASGSGLL) traverse the membrane as a helical segment. Residues 119–575 (TKDDELEGIC…KWIQELHIYN (457 aa)) lie on the Cytoplasmic side of the membrane. Residue Lys-193 coordinates ATP. 2 positions are modified to phosphoserine; by autocatalysis: Ser-202 and Ser-204. A Mg(2+)-binding site is contributed by Glu-214. Thr-305 carries the post-translational modification Phosphothreonine; by autocatalysis. Asp-334 functions as the Proton acceptor in the catalytic mechanism. Residues Asn-339 and Asp-357 each contribute to the Mg(2+) site.

Belongs to the protein kinase superfamily. Ser/Thr protein kinase family. It depends on Mg(2+) as a cofactor. In terms of processing, proteolytically cleaved. In healthy cells, the precursor is continuously imported into mitochondria where it is proteolytically cleaved into its short form by the mitochondrial rhomboid protease rho-7 (8231301). The short form is then released into the cytosol where it rapidly undergoes proteasome-dependent degradation. In unhealthy cells, when cellular stress conditions lead to the loss of mitochondrial membrane potential, mitochondrial import is impaired leading to the precursor accumulating on the outer mitochondrial membrane (OMM). Autophosphorylated. Autophosphorylated on Ser-202, which activates kinase activity. Loss of mitochondrial membrane potential results in the precursor accumulating on the outer mitochondrial membrane (OMM) where it is activated by autophosphorylation at Ser-202. Autophosphorylation is sufficient and essential for selective recruitment of park to depolarized mitochondria, likely via Pink1-dependent phosphorylation of polyubiquitin chains. Also autophosphorylated at Ser-204 and Thr-305.

The protein localises to the mitochondrion outer membrane. It localises to the mitochondrion inner membrane. Its subcellular location is the cytoplasm. The protein resides in the cytosol. It catalyses the reaction L-seryl-[protein] + ATP = O-phospho-L-seryl-[protein] + ADP + H(+). It carries out the reaction L-threonyl-[protein] + ATP = O-phospho-L-threonyl-[protein] + ADP + H(+). Its function is as follows. Acts as a serine/threonine-protein kinase. Exhibits a substrate preference for proline at position P+1 and a general preference at several residues for basic residues such as arginine. Also exhibits moderate preferences for a phosphotyrosine at position P-3 and a tryptophan at P-5. Critical to mitochondrial homeostasis it mediates several pathways that maintain mitochondrial health and function Protects against mitochondrial dysfunction during cellular stress by phosphorylating mitochondrial proteins such as park and likely Drp1, to coordinate mitochondrial quality control mechanisms that remove and replace dysfunctional mitochondrial components. Depending on the severity of mitochondrial damage and/or dysfunction, activity ranges from preventing apoptosis and stimulating mitochondrial biogenesis to regulating mitochondrial dynamics and eliminating severely damaged mitochondria via mitophagy. Appears to be particularly important in maintaining the physiology and function of cells with high energy demands that are undergoing stress or altered metabolic environment, including spermatids, muscle cells and neurons such as the dopaminergic (DA) neurons. Mediates the translocation and activation of park at the outer membrane (OMM) of dysfunctional/depolarized mitochondria. At the OMM of damaged mitochondria, phosphorylates pre-existing polyubiquitin chains, the Pink1-phosphorylated polyubiquitin then recruits park from the cytosol to the OMM where park is fully activated by phosphorylation at 'Ser-94' by Pink1. When cellular stress results in irreversible mitochondrial damage, functions with park to promote the clearance of dysfunctional and/or depolarized mitochondria by selective autophagy (mitophagy). The Pink1-park pathway also promotes fission and/or inhibits fusion of damaged mitochondria, by phosphorylating and thus promoting the park-dependent degradation of proteins involved in mitochondrial fusion/fission such as Marf, Opa1 and fzo. This prevents the refusion of unhealthy mitochondria with the mitochondrial network or initiates mitochondrial fragmentation facilitating their later engulfment by autophagosomes. Also likely to promote mitochondrial fission independently of park and Atg7-mediated mitophagy, via the phosphorylation and activation of Drp1. Regulates motility of damaged mitochondria by phosphorylating Miro which likely promotes its park-dependent degradation by the proteasome; in motor neurons, this inhibits mitochondrial intracellular anterograde transport along the axons which probably increases the chance of the mitochondria being eliminated in the soma. The Pink1-park pathway is also involved in mitochondrial regeneration processes such as promoting mitochondrial biogenesis, activating localized mitochondrial repair, promoting selective turnover of mitochondrial proteins and initiating the mitochondrial import of endogenous proteins. Involved in mitochondrial biogenesis by promoting the park-dependent ubiquitination of transcriptional repressor Paris which leads to its subsequent proteasomal degradation and allows activation of the transcription factor srl. Functions with park to promote localized mitochondrial repair by activating the translation of specific nuclear-encoded mitochondrial RNAs (nc-mtRNAs) on the mitochondrial surface, including several key electron transport chain component nc-mtRNAs. During oogenesis, phosphorylates and inactivates larp on the membrane of defective mitochondria, thus impairing local translation and mtDNA replication and consequently, reducing transmission of deleterious mtDNA mutations to the mature oocyte. Phosphorylates the mitochondrial acyl-CoA dehydrogenase Mcad, and appears to be important for maintaining fatty acid and amino acid metabolism via a mechanism that is independent of it's role in maintaining production of ATP. This chain is Serine/threonine-protein kinase Pink1, mitochondrial, found in Pediculus humanus subsp. corporis (Body louse).